Here is a 155-residue protein sequence, read N- to C-terminus: Small ribosomal subunit protein uS7 (155 aa).

It belongs to the universal ribosomal protein uS7 family. Part of the 30S ribosomal subunit. Contacts proteins S9 and S11.

In terms of biological role, one of the primary rRNA binding proteins, it binds directly to 16S rRNA where it nucleates assembly of the head domain of the 30S subunit. Is located at the subunit interface close to the decoding center, probably blocks exit of the E-site tRNA. The sequence is that of Small ribosomal subunit protein uS7 from Ureaplasma parvum serovar 3 (strain ATCC 27815 / 27 / NCTC 11736).